An 89-amino-acid chain; its full sequence is Phosphocarrier protein HPr (89 aa).

The 88-residue stretch at 2 to 89 folds into the HPr domain; sequence AKFSAIITDK…TMIDTALIQG (88 aa). The active-site Pros-phosphohistidine intermediate is the H15. S46 carries the post-translational modification Phosphoserine; by HPrK/P.

The protein belongs to the HPr family.

Its subcellular location is the cytoplasm. Phosphorylation on Ser-46 inhibits the phosphoryl transfer from enzyme I to HPr. General (non sugar-specific) component of the phosphoenolpyruvate-dependent sugar phosphotransferase system (sugar PTS). This major carbohydrate active-transport system catalyzes the phosphorylation of incoming sugar substrates concomitantly with their translocation across the cell membrane. The phosphoryl group from phosphoenolpyruvate (PEP) is transferred to the phosphoryl carrier protein HPr by enzyme I. Phospho-HPr then transfers it to the PTS EIIA domain. Functionally, P-Ser-HPr interacts with the catabolite control protein A (CcpA), forming a complex that binds to DNA at the catabolite response elements cre, operator sites preceding a large number of catabolite-regulated genes. Thus, P-Ser-HPr is a corepressor in carbon catabolite repression (CCR), a mechanism that allows bacteria to coordinate and optimize the utilization of available carbon sources. P-Ser-HPr also plays a role in inducer exclusion, in which it probably interacts with several non-PTS permeases and inhibits their transport activity. This chain is Phosphocarrier protein HPr (ptsH), found in Mycoplasma capricolum subsp. capricolum (strain California kid / ATCC 27343 / NCTC 10154).